Consider the following 259-residue polypeptide: Borneol dehydrogenase, mitochondrial (259 aa).

The transit peptide at 1–30 (MASTVLRRLEGKVALITGAASGIGESAARL) directs the protein to the mitochondrion. NAD(+) contacts are provided by residues 21–23 (SGI), D42, 63–64 (DV), and 90–92 (NAG). S144 acts as the Proton donor in catalysis. Residues S144 and Y157 each contribute to the substrate site. Residues Y157, K161, and T192 each contribute to the NAD(+) site. Y157 serves as the catalytic Proton acceptor. Residue K161 is the Proton donor/acceptor of the active site.

This sequence belongs to the short-chain dehydrogenases/reductases (SDR) family. In terms of tissue distribution, specifically expressed in glandular trichomes of mature flowers.

Its subcellular location is the mitochondrion. The enzyme catalyses borneol + NAD(+) = camphor + NADH + H(+). It participates in secondary metabolite biosynthesis; terpenoid biosynthesis. Its function is as follows. Involved in the biosynthesis of monoterpenes natural products related to camphor. Catalyzes the conversion of borneol into camphor. The protein is Borneol dehydrogenase, mitochondrial of Lavandula x intermedia (Lavandin).